A 695-amino-acid chain; its full sequence is Ubiquitin carboxyl-terminal hydrolase 20 (695 aa).

2 disordered regions span residues 1-20 (MLMAKPDVPSSILPRSSSIL) and 42-162 (SLAL…SLFY). 2 stretches are compositionally biased toward low complexity: residues 9 to 20 (PSSILPRSSSIL) and 61 to 86 (NHDSVSIPPPIYDGYSSSSSDESQSV). The segment covering 112-124 (DDIDDDIWGDDDL) has biased composition (acidic residues). A USP domain is found at 176–476 (AGLWNLGNSC…DSYILFYARE (301 aa)). C185 acts as the Nucleophile in catalysis. Residue H435 is the Proton acceptor of the active site. Positions 556 to 571 (SAESSSGEESPMGELL) are enriched in low complexity. Disordered stretches follow at residues 556–585 (SAESSSGEESPMGELLDPLDPDDSYSPCTE) and 674–695 (ARELLDQAISTNGSPPKKLKTT).

It belongs to the peptidase C19 family.

The catalysed reaction is Thiol-dependent hydrolysis of ester, thioester, amide, peptide and isopeptide bonds formed by the C-terminal Gly of ubiquitin (a 76-residue protein attached to proteins as an intracellular targeting signal).. Recognizes and hydrolyzes the peptide bond at the C-terminal Gly of ubiquitin. Involved in the processing of poly-ubiquitin precursors as well as that of ubiquitinated proteins. This Arabidopsis thaliana (Mouse-ear cress) protein is Ubiquitin carboxyl-terminal hydrolase 20 (UBP20).